Consider the following 184-residue polypeptide: Protein DP71L (184 aa).

The span at 1 to 15 (MSRRNKRSRRRRKKP) shows a compositional bias: basic residues. The tract at residues 1 to 41 (MSRRNKRSRRRRKKPLNTIQPGPSKPSAQDEPIKSVSHHSS) is disordered. Important for host CHOP inhibition stretches follow at residues 125–127 (VYF) and 169–173 (LSAVL).

Belongs to the asfivirus DP71L family. Interacts (via C-terminus) with host PPP1CB.

Interacts with the host phosphatase PP1 catalytic subunit (PPP1CB) and recruits it to dephosphorylate EIF2S1/eIF2alpha and therefore restores the host translation that has been shut-down by the host. Also inhibits the EIF2S1/eIF2alpha-ATF4-DDIT3/CHOP pathway. This is Protein DP71L from Ornithodoros (relapsing fever ticks).